The sequence spans 177 residues: Prorelaxin (177 aa).

Positions 1–25 (MLRWFLSHLLGVWLLLSQLPREIPA) are cleaved as a signal peptide. 3 disulfides stabilise this stretch: cysteine 34/cysteine 164, cysteine 46/cysteine 177, and cysteine 163/cysteine 168. Positions 63-149 (QISEPLAEVV…KSLSKLDKHP (87 aa)) are cleaved as a propeptide — connecting peptide.

Belongs to the insulin family. As to quaternary structure, heterodimer of a B chain and an A chain linked by two disulfide bonds. As to expression, placenta; syncytiotrophoblast.

Its subcellular location is the secreted. Its function is as follows. Relaxin is an ovarian hormone that acts with estrogen to produce dilatation of the birth canal in many mammals. The sequence is that of Prorelaxin (RLN) from Canis lupus familiaris (Dog).